The sequence spans 104 residues: Complex III assembly factor LYRM7 (104 aa).

It belongs to the complex I LYR family. Interacts with UQCRFS1.

The protein localises to the mitochondrion matrix. Assembly factor required for Rieske Fe-S protein UQCRFS1 incorporation into the cytochrome b-c1 (CIII) complex. Functions as a chaperone, binding to this subunit within the mitochondrial matrix and stabilizing it prior to its translocation and insertion into the late CIII dimeric intermediate within the mitochondrial inner membrane. The protein is Complex III assembly factor LYRM7 (lyrm7) of Xenopus tropicalis (Western clawed frog).